Reading from the N-terminus, the 56-residue chain is uncharacterized protein (56 aa).

The helical transmembrane segment at 33-53 (INIIYLAIMKIIMNIIMMIMI) threads the bilayer.

It is found in the host membrane. This is an uncharacterized protein from Bos taurus (Bovine).